A 385-amino-acid chain; its full sequence is Cytochrome b (385 aa).

A run of 4 helical transmembrane segments spans residues Phe34 to Met54, Trp78 to Ile99, Trp114 to Leu134, and Phe179 to Leu199. Residues His84 and His98 each contribute to the heme b site. 2 residues coordinate heme b: His183 and His197. His202 is a binding site for a ubiquinone. 4 consecutive transmembrane segments (helical) span residues Phe227–Phe247, Leu289–Ile309, Phe321–Ala341, and Tyr348–Pro368.

The protein belongs to the cytochrome b family. The cytochrome bc1 complex contains 3 respiratory subunits (MT-CYB, CYC1 and UQCRFS1), 2 core proteins (UQCRC1 and UQCRC2) and probably 6 low-molecular weight proteins. Heme b is required as a cofactor.

Its subcellular location is the mitochondrion inner membrane. In terms of biological role, component of the ubiquinol-cytochrome c reductase complex (complex III or cytochrome b-c1 complex) that is part of the mitochondrial respiratory chain. The b-c1 complex mediates electron transfer from ubiquinol to cytochrome c. Contributes to the generation of a proton gradient across the mitochondrial membrane that is then used for ATP synthesis. The sequence is that of Cytochrome b (MT-CYB) from Myxine glutinosa (Atlantic hagfish).